Here is a 78-residue protein sequence, read N- to C-terminus: Large ribosomal subunit protein bL28 (78 aa).

Positions 1-30 (MAAHCQVTGAQPGFGHSISHSHRRTKRRWN) are disordered. The segment covering 19 to 30 (SHSHRRTKRRWN) has biased composition (basic residues).

This sequence belongs to the bacterial ribosomal protein bL28 family.

This chain is Large ribosomal subunit protein bL28, found in Kocuria rhizophila (strain ATCC 9341 / DSM 348 / NBRC 103217 / DC2201).